The sequence spans 224 residues: MINLTVKIAIDGPAGAGKSTVAKKLAKLLGFTYIDTGAMYRAITLKVLRENISLEDEERIVEVARKSDISLDGERVFLDGEDVSEEIRKPIISQKVSVVSQIPEVREILVKKQRKIAEGKNVVMDGRDIGTVVLPDAQFKFFLTASLEERARRRYEELKNKGTEVKYEEVLEEIKKRDSLDSGRKTSPLTIPEGAILIDTTDLTEEEVVERVYEAIRKNTKGEI.

12–20 (GPAGAGKST) contacts ATP.

Belongs to the cytidylate kinase family. Type 1 subfamily.

The protein resides in the cytoplasm. It catalyses the reaction CMP + ATP = CDP + ADP. The enzyme catalyses dCMP + ATP = dCDP + ADP. The sequence is that of Cytidylate kinase from Caldanaerobacter subterraneus subsp. tengcongensis (strain DSM 15242 / JCM 11007 / NBRC 100824 / MB4) (Thermoanaerobacter tengcongensis).